The following is a 207-amino-acid chain: MLGRPKLVLASGSPRRLALLNQAGIEPDALRPADVDETPIRGELPRACANRLARAKAEAALQSIQLDDDLRGSYLLAADTVVAVGRRILPKAELTDEASQCLRLLSGRNHRVYTAVCLVTPKEAFRQRLVETRVRFKRLSEEDIAGYVGSGEWRGKAGGYAVQGIAGSFVVKLVGSYTNVVGLPLYETISLLGGEGFPIRHGWLNAG.

D79 functions as the Proton acceptor in the catalytic mechanism.

This sequence belongs to the Maf family. YhdE subfamily. A divalent metal cation serves as cofactor.

The protein resides in the cytoplasm. The catalysed reaction is dTTP + H2O = dTMP + diphosphate + H(+). The enzyme catalyses UTP + H2O = UMP + diphosphate + H(+). Its function is as follows. Nucleoside triphosphate pyrophosphatase that hydrolyzes dTTP and UTP. May have a dual role in cell division arrest and in preventing the incorporation of modified nucleotides into cellular nucleic acids. In Rhodopseudomonas palustris (strain ATCC BAA-98 / CGA009), this protein is dTTP/UTP pyrophosphatase.